The primary structure comprises 186 residues: dCTP deaminase, dUMP-forming (186 aa).

DCTP is bound by residues 101–106 (RSSLGR), aspartate 119, 127–129 (TLE), glutamine 148, tyrosine 162, and glutamine 171. Residue glutamate 129 is the Proton donor/acceptor of the active site.

It belongs to the dCTP deaminase family. As to quaternary structure, homotrimer.

It catalyses the reaction dCTP + 2 H2O = dUMP + NH4(+) + diphosphate. The protein operates within pyrimidine metabolism; dUMP biosynthesis; dUMP from dCTP: step 1/1. Its function is as follows. Bifunctional enzyme that catalyzes both the deamination of dCTP to dUTP and the hydrolysis of dUTP to dUMP without releasing the toxic dUTP intermediate. The sequence is that of dCTP deaminase, dUMP-forming from Coprothermobacter proteolyticus (strain ATCC 35245 / DSM 5265 / OCM 4 / BT).